Consider the following 266-residue polypeptide: Killer cell lectin-like receptor 6 (266 aa).

Residues 1–44 (MSEPEVTYSTVRLHKSSRLQKLVRHEETQGPREAGYRKCSVCWQ) lie on the Cytoplasmic side of the membrane. Residues 45–66 (LIVKALGILCFLLLITVAVLAV) traverse the membrane as a helical; Signal-anchor for type II membrane protein segment. The Extracellular portion of the chain corresponds to 67–266 (KIFQYGQHNQ…CGKKLDKFPH (200 aa)). Asparagine 87 and asparagine 104 each carry an N-linked (GlcNAc...) asparagine glycan. The C-type lectin domain occupies 143 to 261 (GVKYWFCYRT…SHYCICGKKL (119 aa)). Disulfide bonds link cysteine 149/cysteine 154, cysteine 167/cysteine 255, cysteine 171/cysteine 257, and cysteine 236/cysteine 249.

As to quaternary structure, homodimer; disulfide-linked.

It localises to the membrane. Its function is as follows. Receptor on natural killer (NK) cells for class I MHC. The protein is Killer cell lectin-like receptor 6 (Klra6) of Mus musculus (Mouse).